The primary structure comprises 314 residues: 4-hydroxy-3-methylbut-2-enyl diphosphate reductase (314 aa).

Cysteine 12 is a binding site for [4Fe-4S] cluster. 2 residues coordinate (2E)-4-hydroxy-3-methylbut-2-enyl diphosphate: histidine 41 and histidine 74. Dimethylallyl diphosphate contacts are provided by histidine 41 and histidine 74. Isopentenyl diphosphate is bound by residues histidine 41 and histidine 74. Cysteine 96 lines the [4Fe-4S] cluster pocket. Position 124 (histidine 124) interacts with (2E)-4-hydroxy-3-methylbut-2-enyl diphosphate. Histidine 124 contributes to the dimethylallyl diphosphate binding site. An isopentenyl diphosphate-binding site is contributed by histidine 124. Glutamate 126 acts as the Proton donor in catalysis. A (2E)-4-hydroxy-3-methylbut-2-enyl diphosphate-binding site is contributed by threonine 167. Cysteine 197 serves as a coordination point for [4Fe-4S] cluster. Serine 225, serine 226, asparagine 227, and serine 269 together coordinate (2E)-4-hydroxy-3-methylbut-2-enyl diphosphate. Dimethylallyl diphosphate is bound by residues serine 225, serine 226, asparagine 227, and serine 269. Isopentenyl diphosphate contacts are provided by serine 225, serine 226, asparagine 227, and serine 269.

Belongs to the IspH family. It depends on [4Fe-4S] cluster as a cofactor.

It carries out the reaction isopentenyl diphosphate + 2 oxidized [2Fe-2S]-[ferredoxin] + H2O = (2E)-4-hydroxy-3-methylbut-2-enyl diphosphate + 2 reduced [2Fe-2S]-[ferredoxin] + 2 H(+). It catalyses the reaction dimethylallyl diphosphate + 2 oxidized [2Fe-2S]-[ferredoxin] + H2O = (2E)-4-hydroxy-3-methylbut-2-enyl diphosphate + 2 reduced [2Fe-2S]-[ferredoxin] + 2 H(+). Its pathway is isoprenoid biosynthesis; dimethylallyl diphosphate biosynthesis; dimethylallyl diphosphate from (2E)-4-hydroxy-3-methylbutenyl diphosphate: step 1/1. It functions in the pathway isoprenoid biosynthesis; isopentenyl diphosphate biosynthesis via DXP pathway; isopentenyl diphosphate from 1-deoxy-D-xylulose 5-phosphate: step 6/6. Catalyzes the conversion of 1-hydroxy-2-methyl-2-(E)-butenyl 4-diphosphate (HMBPP) into a mixture of isopentenyl diphosphate (IPP) and dimethylallyl diphosphate (DMAPP). Acts in the terminal step of the DOXP/MEP pathway for isoprenoid precursor biosynthesis. The protein is 4-hydroxy-3-methylbut-2-enyl diphosphate reductase of Mannheimia succiniciproducens (strain KCTC 0769BP / MBEL55E).